The chain runs to 25 residues: Pregnancy-associated glycoprotein 74 (25 aa).

N-linked (GlcNAc...) asparagine glycans are attached at residues Asn4 and Asn21.

Belongs to the peptidase A1 family. In terms of processing, N-glycosylated. Placental cotyledons.

The protein localises to the secreted. Its subcellular location is the extracellular space. This is Pregnancy-associated glycoprotein 74 from Bison bison (American bison).